We begin with the raw amino-acid sequence, 946 residues long: Bifunctional glutamine synthetase adenylyltransferase/adenylyl-removing enzyme (946 aa).

The tract at residues 1 to 440 is adenylyl removase; that stretch reads MKPLSSPLQQ…VFNELIGDDE (440 aa). The interval 449 to 946 is adenylyl transferase; it reads SEQWRELWQD…ASWQKWLVEE (498 aa).

Belongs to the GlnE family. Requires Mg(2+) as cofactor.

It carries out the reaction [glutamine synthetase]-O(4)-(5'-adenylyl)-L-tyrosine + phosphate = [glutamine synthetase]-L-tyrosine + ADP. The catalysed reaction is [glutamine synthetase]-L-tyrosine + ATP = [glutamine synthetase]-O(4)-(5'-adenylyl)-L-tyrosine + diphosphate. In terms of biological role, involved in the regulation of glutamine synthetase GlnA, a key enzyme in the process to assimilate ammonia. When cellular nitrogen levels are high, the C-terminal adenylyl transferase (AT) inactivates GlnA by covalent transfer of an adenylyl group from ATP to specific tyrosine residue of GlnA, thus reducing its activity. Conversely, when nitrogen levels are low, the N-terminal adenylyl removase (AR) activates GlnA by removing the adenylyl group by phosphorolysis, increasing its activity. The regulatory region of GlnE binds the signal transduction protein PII (GlnB) which indicates the nitrogen status of the cell. This chain is Bifunctional glutamine synthetase adenylyltransferase/adenylyl-removing enzyme, found in Escherichia coli O7:K1 (strain IAI39 / ExPEC).